Consider the following 383-residue polypeptide: Mannitol-1-phosphate 5-dehydrogenase (383 aa).

3–14 is an NAD(+) binding site; the sequence is AVHFGAGNIGRG.

It belongs to the mannitol dehydrogenase family.

The enzyme catalyses D-mannitol 1-phosphate + NAD(+) = beta-D-fructose 6-phosphate + NADH + H(+). This chain is Mannitol-1-phosphate 5-dehydrogenase, found in Lacticaseibacillus casei (strain BL23) (Lactobacillus casei).